We begin with the raw amino-acid sequence, 251 residues long: Lactose phosphotransferase system repressor (251 aa).

The HTH deoR-type domain occupies 3–58 (KYDRLDEITKLVNKRGSVRTNEIVEDLNVSDMTVRRDLAELEEKGVLTKIHGGARS). Residues 20 to 39 (VRTNEIVEDLNVSDMTVRRD) constitute a DNA-binding region (H-T-H motif).

Functionally, repressor of the lactose catabolism operon. Galactose-6-phosphate is the inducer. The polypeptide is Lactose phosphotransferase system repressor (lacR) (Staphylococcus epidermidis (strain ATCC 35984 / DSM 28319 / BCRC 17069 / CCUG 31568 / BM 3577 / RP62A)).